Here is a 133-residue protein sequence, read N- to C-terminus: Large ribosomal subunit protein bL17 (133 aa).

Belongs to the bacterial ribosomal protein bL17 family. In terms of assembly, part of the 50S ribosomal subunit. Contacts protein L32.

This chain is Large ribosomal subunit protein bL17, found in Thermodesulfovibrio yellowstonii (strain ATCC 51303 / DSM 11347 / YP87).